Consider the following 82-residue polypeptide: Neuropeptide-like peptide 36 (82 aa).

This Caenorhabditis elegans protein is Neuropeptide-like peptide 36 (nlp-36).